Consider the following 336-residue polypeptide: Monoacylglycerol lipase ABHD6 (336 aa).

Over 1–8 the chain is Extracellular; sequence MDLDVVNM. The helical; Signal-anchor for type II membrane protein transmembrane segment at 9–29 threads the bilayer; that stretch reads FVIAGGTLAIPILAFVASFLL. At 30-336 the chain is on the cytoplasmic side; the sequence is WPSALIRIYY…VHNTDNKKLN (307 aa). Residue serine 148 is the Nucleophile of the active site. Residues aspartate 278 and histidine 306 each act as charge relay system in the active site.

Belongs to the AB hydrolase superfamily. In terms of tissue distribution, widely expressed with higher expression in small intestine, liver and brown adipose tissue. In brain, expressed postsynaptically in cortical neurons but not detected in microglia (at protein level).

Its subcellular location is the late endosome membrane. The protein localises to the lysosome membrane. It localises to the mitochondrion membrane. The enzyme catalyses Hydrolyzes glycerol monoesters of long-chain fatty acids.. It carries out the reaction 2-(5Z,8Z,11Z,14Z-eicosatetraenoyl)-glycerol + H2O = glycerol + (5Z,8Z,11Z,14Z)-eicosatetraenoate + H(+). It catalyses the reaction 1-octanoylglycerol + H2O = octanoate + glycerol + H(+). The catalysed reaction is 1-decanoylglycerol + H2O = decanoate + glycerol + H(+). The enzyme catalyses 1-dodecanoylglycerol + H2O = dodecanoate + glycerol + H(+). It carries out the reaction 1-tetradecanoylglycerol + H2O = tetradecanoate + glycerol + H(+). It catalyses the reaction 2-hexadecanoylglycerol + H2O = glycerol + hexadecanoate + H(+). The catalysed reaction is 2-(9Z-octadecenoyl)-glycerol + H2O = glycerol + (9Z)-octadecenoate + H(+). The enzyme catalyses 1-(9Z-octadecenoyl)-glycerol + H2O = glycerol + (9Z)-octadecenoate + H(+). It carries out the reaction 2-(9Z,12Z-octadecadienoyl)-glycerol + H2O = (9Z,12Z)-octadecadienoate + glycerol + H(+). It catalyses the reaction 1-(5Z,8Z,11Z,14Z-eicosatetraenoyl)-glycerol + H2O = glycerol + (5Z,8Z,11Z,14Z)-eicosatetraenoate + H(+). The catalysed reaction is 1-(9Z,12Z-octadecadienoyl)-glycerol + H2O = (9Z,12Z)-octadecadienoate + glycerol + H(+). The enzyme catalyses 3-(9Z-octadecenoyl)-sn-glycero-1-phospho-(3'-(9Z-octadecenoyl)-1'-sn-glycerol) + H2O = 3-(9Z-octadecenoyl)-sn-glycero-1-phospho-(1'-sn-glycerol) + (9Z)-octadecenoate + H(+). It carries out the reaction (S,S)-2-(9Z-octadecenoyl)-sn-glycero-1-phospho-(2'-(9Z-octadecenoyl)-1'-sn-glycerol) + H2O = (S,S)-2-(9Z-octadecenoyl)-sn-glycero-1-phospho-(1'-sn-glycerol) + (9Z)-octadecenoate + H(+). It catalyses the reaction (R,R)-2-(9Z-octadecenoyl)-sn-glycero-3-phospho-(2'-(9Z-octadecenoyl)-3'-sn-glycerol) + H2O = (R,R)-2-(9Z-octadecenoyl)-sn-glycero-3-phospho-(3'-sn-glycerol) + (9Z)-octadecenoate + H(+). Lipase that preferentially hydrolysis medium-chain saturated monoacylglycerols including 2-arachidonoylglycerol. Through 2-arachidonoylglycerol degradation may regulate endocannabinoid signaling pathways. Also has a lysophosphatidyl lipase activity with a preference for lysophosphatidylglycerol among other lysophospholipids. Also able to degrade bis(monoacylglycero)phosphate (BMP) and constitutes the major enzyme for BMP catabolism. BMP, also known as lysobisphosphatidic acid, is enriched in late endosomes and lysosomes and plays a key role in the formation of intraluminal vesicles and in lipid sorting. This Mus musculus (Mouse) protein is Monoacylglycerol lipase ABHD6.